The following is a 508-amino-acid chain: Photosystem II CP47 reaction center protein (508 aa).

The next 6 membrane-spanning stretches (helical) occupy residues 21 to 36 (AVHL…WAGS), 101 to 115 (IVLS…VWHW), 140 to 156 (GIHL…FGAF), 203 to 218 (IAAG…FHLT), 237 to 252 (VLSS…AFVV), and 457 to 472 (SFAL…HGSR).

This sequence belongs to the PsbB/PsbC family. PsbB subfamily. As to quaternary structure, PSII is composed of 1 copy each of membrane proteins PsbA, PsbB, PsbC, PsbD, PsbE, PsbF, PsbH, PsbI, PsbJ, PsbK, PsbL, PsbM, PsbT, PsbX, PsbY, PsbZ, Psb30/Ycf12, peripheral proteins PsbO, CyanoQ (PsbQ), PsbU, PsbV and a large number of cofactors. It forms dimeric complexes. Binds multiple chlorophylls. PSII binds additional chlorophylls, carotenoids and specific lipids. serves as cofactor.

The protein localises to the cellular thylakoid membrane. Its function is as follows. One of the components of the core complex of photosystem II (PSII). It binds chlorophyll and helps catalyze the primary light-induced photochemical processes of PSII. PSII is a light-driven water:plastoquinone oxidoreductase, using light energy to abstract electrons from H(2)O, generating O(2) and a proton gradient subsequently used for ATP formation. The protein is Photosystem II CP47 reaction center protein of Synechococcus elongatus (strain ATCC 33912 / PCC 7942 / FACHB-805) (Anacystis nidulans R2).